We begin with the raw amino-acid sequence, 201 residues long: FMN-dependent NADH:quinone oxidoreductase (201 aa).

FMN is bound at residue 92 to 95 (MWNL).

This sequence belongs to the azoreductase type 1 family. Homodimer. Requires FMN as cofactor.

It catalyses the reaction 2 a quinone + NADH + H(+) = 2 a 1,4-benzosemiquinone + NAD(+). It carries out the reaction N,N-dimethyl-1,4-phenylenediamine + anthranilate + 2 NAD(+) = 2-(4-dimethylaminophenyl)diazenylbenzoate + 2 NADH + 2 H(+). Functionally, quinone reductase that provides resistance to thiol-specific stress caused by electrophilic quinones. Also exhibits azoreductase activity. Catalyzes the reductive cleavage of the azo bond in aromatic azo compounds to the corresponding amines. The polypeptide is FMN-dependent NADH:quinone oxidoreductase (Caldicellulosiruptor bescii (strain ATCC BAA-1888 / DSM 6725 / KCTC 15123 / Z-1320) (Anaerocellum thermophilum)).